The primary structure comprises 575 residues: 3-hydroxy-3-methylglutaryl-coenzyme A reductase 1 (575 aa).

Basic residues predominate over residues 1–13 (MDTTGRLHHRKHA). Residues 1-25 (MDTTGRLHHRKHATPVEDRSPTTPK) are disordered. The next 2 helical transmembrane spans lie at 29–49 (ALPL…FSVA) and 73–93 (EIVA…FFGI). A linker region spans residues 97-160 (QSFIARASHD…PLIAPLVSEE (64 aa)). Residue Asn-132 is glycosylated (N-linked (GlcNAc...) asparagine). The tract at residues 161–575 (DEMIVNSVVD…SSKDMSKAAS (415 aa)) is catalytic. Catalysis depends on Glu-254, which acts as the Charge relay system. An N-linked (GlcNAc...) asparagine glycan is attached at Asn-318. Residues Lys-386 and Asp-462 each act as charge relay system in the active site. The chain crosses the membrane as a helical span at residues 531–551 (LLAAIVAGSVLAGELSLMSAI). His-560 (proton donor) is an active-site residue. N-linked (GlcNAc...) asparagine glycosylation occurs at Asn-564.

The protein belongs to the HMG-CoA reductase family.

It localises to the endoplasmic reticulum membrane. The protein resides in the mitochondrion membrane. The protein localises to the plastid membrane. The enzyme catalyses (R)-mevalonate + 2 NADP(+) + CoA = (3S)-3-hydroxy-3-methylglutaryl-CoA + 2 NADPH + 2 H(+). It functions in the pathway metabolic intermediate biosynthesis; (R)-mevalonate biosynthesis; (R)-mevalonate from acetyl-CoA: step 3/3. Catalyzes the synthesis of mevalonate. The specific precursor of all isoprenoid compounds present in plants. The sequence is that of 3-hydroxy-3-methylglutaryl-coenzyme A reductase 1 (HMGR1) from Hevea brasiliensis (Para rubber tree).